We begin with the raw amino-acid sequence, 204 residues long: Tat proofreading chaperone DmsD (204 aa).

It belongs to the TorD/DmsD family. DmsD subfamily.

Functionally, required for biogenesis/assembly of DMSO reductase, but not for the interaction of the DmsA signal peptide with the Tat system. May be part of a chaperone cascade complex that facilitates a folding-maturation pathway for the substrate protein. The chain is Tat proofreading chaperone DmsD from Escherichia coli O6:H1 (strain CFT073 / ATCC 700928 / UPEC).